The following is a 211-amino-acid chain: Large ribosomal subunit protein uL3 (211 aa).

Positions asparagine 122–proline 157 are disordered.

This sequence belongs to the universal ribosomal protein uL3 family. As to quaternary structure, part of the 50S ribosomal subunit. Forms a cluster with proteins L14 and L19.

Functionally, one of the primary rRNA binding proteins, it binds directly near the 3'-end of the 23S rRNA, where it nucleates assembly of the 50S subunit. The polypeptide is Large ribosomal subunit protein uL3 (Trichormus variabilis (strain ATCC 29413 / PCC 7937) (Anabaena variabilis)).